Consider the following 635-residue polypeptide: Threonine--tRNA ligase (635 aa).

The TGS domain maps to 1–62 (MITITLPDGS…EHDAILRIIT (62 aa)). Positions 244 to 535 (DHRKIGKAQD…LIEHYAGIWP (292 aa)) are catalytic. C335, H386, and H512 together coordinate Zn(2+).

The protein belongs to the class-II aminoacyl-tRNA synthetase family. As to quaternary structure, homodimer. The cofactor is Zn(2+).

It is found in the cytoplasm. It catalyses the reaction tRNA(Thr) + L-threonine + ATP = L-threonyl-tRNA(Thr) + AMP + diphosphate + H(+). Functionally, catalyzes the attachment of threonine to tRNA(Thr) in a two-step reaction: L-threonine is first activated by ATP to form Thr-AMP and then transferred to the acceptor end of tRNA(Thr). Also edits incorrectly charged L-seryl-tRNA(Thr). The chain is Threonine--tRNA ligase from Xylella fastidiosa (strain M23).